Consider the following 953-residue polypeptide: 26S proteasome non-ATPase regulatory subunit 1 (953 aa).

Met1 is subject to N-acetylmethionine. At Thr273 the chain carries Phosphothreonine. Residues Pro279–Pro318 are disordered. Position 290 is a phosphoserine (Ser290). Residues Ser290–Thr303 show a composition bias toward basic and acidic residues. Lys310 is modified (N6-acetyllysine). At Thr311 the chain carries Phosphothreonine. Ser315 is subject to Phosphoserine. 10 PC repeats span residues Thr403–Ala436, Gly441–Arg474, Gly476–Glu510, Ala511–Leu545, Gly547–Arg580, Ser581–Arg616, Ala617–Arg649, Gly651–Gln685, Gly686–Ala726, and Gly729–Val761. Lys720 is modified (N6-acetyllysine). Thr830 carries the post-translational modification Phosphothreonine. A Phosphoserine modification is found at Ser834. 2 disordered regions span residues Ala839 to Pro881 and Ala930 to Asp953. Basic and acidic residues-rich tracts occupy residues Lys842 to Glu852 and Ala859 to Glu872. Positions Glu936–Asp953 are enriched in acidic residues.

It belongs to the proteasome subunit S1 family. In terms of assembly, component of the 19S proteasome regulatory particle complex. The 26S proteasome consists of a 20S core particle (CP) and two 19S regulatory subunits (RP). The regulatory particle is made of a lid composed of 9 subunits, a base containing 6 ATPases and few additional components including PSMD1. Interacts with ADRM1. Interacts with ZFAND1.

In terms of biological role, component of the 26S proteasome, a multiprotein complex involved in the ATP-dependent degradation of ubiquitinated proteins. This complex plays a key role in the maintenance of protein homeostasis by removing misfolded or damaged proteins, which could impair cellular functions, and by removing proteins whose functions are no longer required. Therefore, the proteasome participates in numerous cellular processes, including cell cycle progression, apoptosis, or DNA damage repair. This Homo sapiens (Human) protein is 26S proteasome non-ATPase regulatory subunit 1 (PSMD1).